The following is a 159-amino-acid chain: Large ribosomal subunit protein eL24 (159 aa).

The tract at residues 118–159 (ANKAVRAAKAAANKEKKASQPKTQQKTAKNVKTAAPRVGGKR) is disordered. Over residues 137–147 (QPKTQQKTAKN) the composition is skewed to polar residues.

Belongs to the eukaryotic ribosomal protein eL24 family.

The chain is Large ribosomal subunit protein eL24 from Caenorhabditis elegans.